A 22-amino-acid polypeptide reads, in one-letter code: Magnificalysin II (22 aa).

The tract at residues 3-12 (ALAGTIIDGA) is plays an important role in the hemolytic activity. Residues 11–22 (GASLGFDILNKV) are N-terminal region.

It belongs to the actinoporin family. Sea anemone subfamily. As to quaternary structure, octamer or nonamer in membranes. Monomer in the soluble state.

Its subcellular location is the secreted. It localises to the nematocyst. The protein localises to the target cell membrane. In terms of biological role, pore-forming protein that forms cations-selective hydrophilic pores of around 1 nm and causes cytolysis. Pore formation is a multi-step process that involves specific recognition of membrane sphingomyelin (but neither cholesterol nor phosphatidylcholine) using aromatic rich region and adjacent phosphocholine (POC) binding site, firm binding to the membrane (mainly driven by hydrophobic interactions) accompanied by the transfer of the N-terminal region to the lipid-water interface and finally pore formation after oligomerization of monomers. The protein is Magnificalysin II of Heteractis magnifica (Magnificent sea anemone).